Consider the following 190-residue polypeptide: MLKSTLAAVAAVFALSALSPAALAAKGDPHVLLTTSAGNIELELNSQKAPVSVKNFVDYVNSGFYNNTTFHRVIPGFMIQGGGFNEQMQQKKPNPPIKNEADNGLRNTRGTIAMARTADKDSATSQFFINVADNAFLDHGQRDFGYAVFGKVVKGMDVADKISQVPTHDVGPYQNVPTKPVVILSAKVLP.

A signal peptide spans 1–24 (MLKSTLAAVAAVFALSALSPAALA). The 162-residue stretch at 27-188 (GDPHVLLTTS…KPVVILSAKV (162 aa)) folds into the PPIase cyclophilin-type domain.

It belongs to the cyclophilin-type PPIase family.

The protein resides in the periplasm. The catalysed reaction is [protein]-peptidylproline (omega=180) = [protein]-peptidylproline (omega=0). PPIases accelerate the folding of proteins. It catalyzes the cis-trans isomerization of proline imidic peptide bonds in oligopeptides. The chain is Peptidyl-prolyl cis-trans isomerase A (ppiA) from Salmonella typhimurium (strain LT2 / SGSC1412 / ATCC 700720).